Here is a 537-residue protein sequence, read N- to C-terminus: Mitochondria-eating protein (537 aa).

The tract at residues 1 to 273 (MADNLRRLVS…PCSRSHSRSR (273 aa)) is interaction with YWHAG/14-3-3 protein gamma. 4 positions are modified to phosphoserine: Ser85, Ser127, Ser154, and Ser157. Residues 115–253 (GTRDIQQLDA…SAEKSVLQGR (139 aa)) adopt a coiled-coil conformation. Disordered regions lie at residues 171–221 (QLKS…ANQR) and 249–293 (VLQG…AKLS). The span at 179–217 (EESRHRNSDRRRSEKRGSERRRVELRGSEQRVSDLDRRS) shows a compositional bias: basic and acidic residues. The span at 253–287 (RSARSRSPSPAPCSRSHSRSRSTSPSSAKARTPSP) shows a compositional bias: low complexity. Phosphoserine is present on residues Ser286 and Ser508.

This sequence belongs to the MIEAP family. Interacts (via coiled-coil domains) with BNIP3L (via BH3 domain). Interacts (via coiled-coil domains) with BNIP3 (via BH3 domain). Interacts with YWHAG/14-3-3 protein gamma; a protein that also plays a role in MALM.

It localises to the cytoplasm. The protein resides in the cytosol. It is found in the mitochondrion outer membrane. The protein localises to the mitochondrion matrix. Key regulator of mitochondrial quality that mediates the repairing or degradation of unhealthy mitochondria in response to mitochondrial damage. Mediator of mitochondrial protein catabolic process (also named MALM) by mediating the degradation of damaged proteins inside mitochondria by promoting the accumulation in the mitochondrial matrix of hydrolases that are characteristic of the lysosomal lumen. Also involved in mitochondrion degradation of damaged mitochondria by promoting the formation of vacuole-like structures (named MIV), which engulf and degrade unhealthy mitochondria by accumulating lysosomes. The physical interaction of SPATA18/MIEAP, BNIP3 and BNIP3L/NIX at the mitochondrial outer membrane regulates the opening of a pore in the mitochondrial double membrane in order to mediate the translocation of lysosomal proteins from the cytoplasm to the mitochondrial matrix. Binds cardiolipin. May form molecular condensates (non-membrane-bounded organelles) within mitochondria that compartmentalize and promote cardiolipin metabolism. This chain is Mitochondria-eating protein (SPATA18), found in Bos taurus (Bovine).